We begin with the raw amino-acid sequence, 55 residues long: Large ribosomal subunit protein bL33 (55 aa).

Residues 1–11 (MAKGGREKIKL) are compositionally biased toward basic and acidic residues. The segment at 1 to 29 (MAKGGREKIKLESSAGTGHFYTTSKNKRT) is disordered. The segment covering 14–24 (SAGTGHFYTTS) has biased composition (polar residues).

It belongs to the bacterial ribosomal protein bL33 family.

The protein is Large ribosomal subunit protein bL33 of Polynucleobacter asymbioticus (strain DSM 18221 / CIP 109841 / QLW-P1DMWA-1) (Polynucleobacter necessarius subsp. asymbioticus).